The chain runs to 139 residues: TDP-4-oxo-6-deoxy-alpha-D-glucose-3,4-oxoisomerase (139 aa).

The active-site Proton acceptor is the histidine 49.

As to quaternary structure, homodimer.

The catalysed reaction is dTDP-4-dehydro-6-deoxy-alpha-D-glucose = dTDP-3-dehydro-6-deoxy-alpha-D-galactose. Mediates the isomerization of dTDP-6-deoxy-D-xylohex-4-ulose into dTDP-6-deoxy-D-xylohex-3-ulose in the biosynthesis of dTDP-3-acetamido-3,6-dideoxy-alpha-D-galactose, a glycan chain of the S-layer. This chain is TDP-4-oxo-6-deoxy-alpha-D-glucose-3,4-oxoisomerase (fdtA), found in Aneurinibacillus thermoaerophilus.